Reading from the N-terminus, the 251-residue chain is Haloacid dehalogenase-like hydrolase domain-containing protein 3 (251 aa).

An N6-acetyllysine; alternate modification is found at lysine 15. Lysine 15 carries the post-translational modification N6-succinyllysine; alternate. Lysine 130 carries the post-translational modification N6-acetyllysine.

Belongs to the HAD-like hydrolase superfamily.

The chain is Haloacid dehalogenase-like hydrolase domain-containing protein 3 (Hdhd3) from Mus musculus (Mouse).